Consider the following 469-residue polypeptide: 6-phospho-beta-galactosidase (469 aa).

Residues Gln-18, His-115, Asn-158, Glu-159, and Asn-296 each contribute to the D-galactose 6-phosphate site. Catalysis depends on Glu-159, which acts as the Proton donor. Glu-374 serves as the catalytic Nucleophile. D-galactose 6-phosphate-binding residues include Ser-429, Trp-430, Lys-436, and Tyr-438.

The protein belongs to the glycosyl hydrolase 1 family.

The catalysed reaction is a 6-phospho-beta-D-galactoside + H2O = D-galactose 6-phosphate + an alcohol. It participates in carbohydrate metabolism; lactose degradation; D-galactose 6-phosphate and beta-D-glucose from lactose 6-phosphate: step 1/1. In Staphylococcus haemolyticus (strain JCSC1435), this protein is 6-phospho-beta-galactosidase.